The chain runs to 697 residues: Serine/threonine-protein kinase tousled-like 2 (697 aa).

Disordered stretches follow at residues 27–136 (KAPL…TAPV) and 289–315 (LAKR…NKTN). A compositionally biased stretch (polar residues) spans 31–44 (NSESSNQSLCSLGS). Residues 46 to 62 (SDKELEQTPEKKQNDQR) are compositionally biased toward basic and acidic residues. A compositionally biased stretch (low complexity) spans 111 to 131 (SSPQHSLSNPLPLPSQQCSPP). Coiled-coil stretches lie at residues 264-293 (AFQN…AKRK) and 334-372 (FKLR…IHNE). In terms of domain architecture, Protein kinase spans 387 to 666 (YLLLHLLGRG…VQQLACDPYL (280 aa)). ATP contacts are provided by residues 393–401 (LGRGGFSEV) and Lys-416. Asp-517 acts as the Proton acceptor in catalysis.

This sequence belongs to the protein kinase superfamily. Ser/Thr protein kinase family. Monomer. May form homodimers; homodimerization may enhance autophosphoylation and enzymatic activity. Heterodimer with TLK1. Mg(2+) is required as a cofactor. Post-translationally, phosphorylated. Autophosphorylated; phosphorylation promotes the assembly of higher order oligomers and enzymatic activity.

It localises to the nucleus. It is found in the nucleoplasm. The protein resides in the cytoplasm. Its subcellular location is the perinuclear region. The protein localises to the cytoskeleton. It carries out the reaction L-seryl-[protein] + ATP = O-phospho-L-seryl-[protein] + ADP + H(+). The catalysed reaction is L-threonyl-[protein] + ATP = O-phospho-L-threonyl-[protein] + ADP + H(+). Serine/threonine-protein kinase involved in the process of chromatin assembly and probably also DNA replication, transcription, repair, and chromosome segregation. Negative regulator of amino acid starvation-induced autophagy. The protein is Serine/threonine-protein kinase tousled-like 2 of Xenopus tropicalis (Western clawed frog).